The primary structure comprises 405 residues: Arginine biosynthesis bifunctional protein ArgJ (405 aa).

Polar residues predominate over residues 1 to 18 (MTSADKNNPDTSTAQGSS). A disordered region spans residues 1 to 21 (MTSADKNNPDTSTAQGSSADL). Positions 167, 189, 200, 281, 400, and 405 each coordinate substrate. Catalysis depends on T200, which acts as the Nucleophile.

The protein belongs to the ArgJ family. Heterotetramer of two alpha and two beta chains.

The protein resides in the cytoplasm. It carries out the reaction N(2)-acetyl-L-ornithine + L-glutamate = N-acetyl-L-glutamate + L-ornithine. It catalyses the reaction L-glutamate + acetyl-CoA = N-acetyl-L-glutamate + CoA + H(+). It functions in the pathway amino-acid biosynthesis; L-arginine biosynthesis; L-ornithine and N-acetyl-L-glutamate from L-glutamate and N(2)-acetyl-L-ornithine (cyclic): step 1/1. Its pathway is amino-acid biosynthesis; L-arginine biosynthesis; N(2)-acetyl-L-ornithine from L-glutamate: step 1/4. Catalyzes two activities which are involved in the cyclic version of arginine biosynthesis: the synthesis of N-acetylglutamate from glutamate and acetyl-CoA as the acetyl donor, and of ornithine by transacetylation between N(2)-acetylornithine and glutamate. In Corynebacterium jeikeium (strain K411), this protein is Arginine biosynthesis bifunctional protein ArgJ.